Consider the following 329-residue polypeptide: Neuropeptides B/W receptor type 1 (329 aa).

Over 1–43 (MHNLTLFESGGDNVSCGGSSLGCPNGSSLAPLPLPQPLAVAVP) the chain is Extracellular. N-linked (GlcNAc...) asparagine glycosylation is found at N3, N13, and N25. A helical membrane pass occupies residues 44–64 (VVYGVICAVGLAGNSAVLYVL). Over 65 to 75 (LRTPRMKTVTN) the chain is Cytoplasmic. A helical membrane pass occupies residues 76–96 (VFILNLAIADELFTLVLPINI). The Extracellular portion of the chain corresponds to 97-112 (ADFLLRRWPFGEVMCK). A disulfide bond links C111 and C190. Residues 113–133 (LIVAVDQYNTFSSLYFLAVMS) form a helical membrane-spanning segment. The Cytoplasmic portion of the chain corresponds to 134–158 (ADRYLVVLATAESRRVSGRTYGAAR). The chain crosses the membrane as a helical span at residues 159 to 179 (AVSLAVWALVTLVVLPFAVFA). Topologically, residues 180–209 (RLDEEQGRRQCVLVFPQPEAFWWRASRLYT) are extracellular. Residues 210-230 (LVLGFAIPVTTICALYTTLLC) form a helical membrane-spanning segment. At 231–250 (RLRAIQLDSHAKALDRAKKR) the chain is on the cytoplasmic side. Residues 251-271 (VTLLVAAILAVCLLCWTPYHL) form a helical membrane-spanning segment. The Extracellular segment spans residues 272–289 (STIVALTTDLPQTPLVIG). Residues 290 to 312 (ISYFITSLSYANSCLNPFLYAFL) form a helical membrane-spanning segment. Topologically, residues 313–329 (DDSFRRSLRQLVSCRSA) are cytoplasmic.

It belongs to the G-protein coupled receptor 1 family.

Its subcellular location is the cell membrane. In terms of biological role, interacts specifically with a number of opioid ligands. Receptor for neuropeptides B and W, which may be involved in neuroendocrine system regulation, food intake and the organization of other signals. The polypeptide is Neuropeptides B/W receptor type 1 (Npbwr1) (Mus musculus (Mouse)).